We begin with the raw amino-acid sequence, 212 residues long: Glycerol-3-phosphate acyltransferase (212 aa).

Transmembrane regions (helical) follow at residues 10–30 (FAAL…AVVV), 90–110 (GYGL…SLGF), 124–144 (FAVS…VAVV), 150–170 (LAAL…GGTI), and 171–191 (WPLN…LFYR).

Belongs to the PlsY family. As to quaternary structure, probably interacts with PlsX.

It localises to the cell inner membrane. The catalysed reaction is an acyl phosphate + sn-glycerol 3-phosphate = a 1-acyl-sn-glycero-3-phosphate + phosphate. It functions in the pathway lipid metabolism; phospholipid metabolism. Its function is as follows. Catalyzes the transfer of an acyl group from acyl-phosphate (acyl-PO(4)) to glycerol-3-phosphate (G3P) to form lysophosphatidic acid (LPA). This enzyme utilizes acyl-phosphate as fatty acyl donor, but not acyl-CoA or acyl-ACP. The protein is Glycerol-3-phosphate acyltransferase of Bordetella avium (strain 197N).